Consider the following 226-residue polypeptide: NifU-like protein 1, chloroplastic (226 aa).

A chloroplast-targeting transit peptide spans 1–76 (MQTTTVPMAA…PVTAVQLPLT (76 aa)).

Belongs to the NifU family. In terms of assembly, homodimer; disulfide-linked.

The protein resides in the plastid. The protein localises to the chloroplast stroma. In terms of biological role, molecular scaffold for [Fe-S] cluster assembly of chloroplastic iron-sulfur proteins. The sequence is that of NifU-like protein 1, chloroplastic (NIFU1) from Oryza sativa subsp. japonica (Rice).